Consider the following 63-residue polypeptide: Bowman-birk type proteinase inhibitor 2 (63 aa).

7 disulfide bridges follow: Cys7–Cys61, Cys8–Cys23, Cys11–Cys57, Cys13–Cys21, Cys31–Cys38, Cys35–Cys50, and Cys40–Cys48.

This sequence belongs to the Bowman-Birk serine protease inhibitor family. Exists as a dimer in its native form.

Inhibits trypsin, chymotrypsin, plasmin and factor XIIa. Does not inhibit factor Xa, thrombin, human plasma kallikrein, porcine pancreatic kallikrein and human urinary kallikrein. In Amburana cearensis (Cerejeira), this protein is Bowman-birk type proteinase inhibitor 2.